The sequence spans 112 residues: Small ribosomal subunit protein bS6 (112 aa).

This sequence belongs to the bacterial ribosomal protein bS6 family.

Functionally, binds together with bS18 to 16S ribosomal RNA. The protein is Small ribosomal subunit protein bS6 of Legionella pneumophila (strain Paris).